Consider the following 474-residue polypeptide: Dihydrolipoyl dehydrogenase (474 aa).

Residues 34–42 (EKEKLGGTC), Lys-51, and Gly-114 contribute to the FAD site. An intrachain disulfide couples Cys-42 to Cys-47. Residues 188–192 (GGGVI), Glu-211, Val-245, and 278–281 (SIGR) each bind NAD(+). FAD contacts are provided by Asp-320 and Ala-328. His-453 serves as the catalytic Proton acceptor.

This sequence belongs to the class-I pyridine nucleotide-disulfide oxidoreductase family. In terms of assembly, homodimer. The cofactor is FAD.

The protein localises to the cytoplasm. The enzyme catalyses N(6)-[(R)-dihydrolipoyl]-L-lysyl-[protein] + NAD(+) = N(6)-[(R)-lipoyl]-L-lysyl-[protein] + NADH + H(+). In terms of biological role, the branched-chain alpha-keto dehydrogenase complex catalyzes the overall conversion of alpha-keto acids to acyl-CoA and CO(2). It contains multiple copies of 3 enzymatic components: branched-chain alpha-keto acid decarboxylase (E1), lipoamide acyltransferase (E2) and lipoamide dehydrogenase (E3). In Bacillus subtilis (strain 168), this protein is Dihydrolipoyl dehydrogenase (bfmBC).